The sequence spans 304 residues: Urease accessory protein UreD (304 aa).

The protein belongs to the UreD family. As to quaternary structure, ureD, UreF and UreG form a complex that acts as a GTP-hydrolysis-dependent molecular chaperone, activating the urease apoprotein by helping to assemble the nickel containing metallocenter of UreC. The UreE protein probably delivers the nickel.

The protein localises to the cytoplasm. Functionally, required for maturation of urease via the functional incorporation of the urease nickel metallocenter. The protein is Urease accessory protein UreD of Haloquadratum walsbyi (strain DSM 16790 / HBSQ001).